A 333-amino-acid polypeptide reads, in one-letter code: Potassium channel protein 1 (333 aa).

Over 1–6 the chain is Cytoplasmic; sequence METYEK. The chain crosses the membrane as a helical span at residues 7–27; it reads IELGIIVIILLILIESVILMT. The Extracellular portion of the chain corresponds to 28-60; it reads VEGWDFFTAFYTAVVTISTVGYGDYTPQTFLGK. The short motif at 46 to 51 is the Selectivity filter element; it reads TVGYGD. A helical transmembrane segment spans residues 61–81; that stretch reads LSVIIYIFAGVGAVAYTMGNI. Residues 82–333 lie on the Cytoplasmic side of the membrane; it reads ASFFIEGHFR…KLKRYVEGVE (252 aa). The RCK N-terminal domain maps to 107–229; it reads NNHYIICGYG…GADRAVCPYI (123 aa). An RCK C-terminal domain is found at 246 to 331; that stretch reads EFIHSLVATE…LEKLKRYVEG (86 aa).

As to quaternary structure, homotetramer.

It is found in the cell membrane. Functionally, potassium channel protein. Seems to conduct potassium at low membrane potentials. The chain is Potassium channel protein 1 from Methanocaldococcus jannaschii (strain ATCC 43067 / DSM 2661 / JAL-1 / JCM 10045 / NBRC 100440) (Methanococcus jannaschii).